A 270-amino-acid polypeptide reads, in one-letter code: Type III pantothenate kinase (270 aa).

Position 11–18 (11–18 (DAGNSRIK)) interacts with ATP. Substrate contacts are provided by residues Tyr-96 and 103 to 106 (GSDR). The Proton acceptor role is filled by Asp-105. Thr-129 is a binding site for ATP. Thr-195 serves as a coordination point for substrate.

It belongs to the type III pantothenate kinase family. As to quaternary structure, homodimer. NH4(+) is required as a cofactor. Requires K(+) as cofactor.

The protein localises to the cytoplasm. It carries out the reaction (R)-pantothenate + ATP = (R)-4'-phosphopantothenate + ADP + H(+). It participates in cofactor biosynthesis; coenzyme A biosynthesis; CoA from (R)-pantothenate: step 1/5. Functionally, catalyzes the phosphorylation of pantothenate (Pan), the first step in CoA biosynthesis. The chain is Type III pantothenate kinase from Paraburkholderia xenovorans (strain LB400).